The following is a 361-amino-acid chain: Terpene synthase 6 (361 aa).

The DDxx(x)D/E motif motif lies at 81-86 (DDVLDA). Positions 223–231 (NDLVSYEKE) match the NDxxSxxxD/E motif motif.

It belongs to the terpene synthase family.

The catalysed reaction is (2E,6E)-farnesyl diphosphate = (2S,3R,6S,9S)-(-)-protoillud-7-ene + diphosphate. Its function is as follows. Terpene synthase that converts its substrate farnesyl diphosphate (FPP) into the sesquiterpene (2S,3R,6S,9S)-(-)-protoillud-7-ene. The protein is Terpene synthase 6 of Dictyostelium discoideum (Social amoeba).